The following is a 114-amino-acid chain: Aspartate 1-decarboxylase (114 aa).

Serine 25 acts as the Schiff-base intermediate with substrate; via pyruvic acid in catalysis. Residue serine 25 is modified to Pyruvic acid (Ser). Threonine 57 lines the substrate pocket. The active-site Proton donor is tyrosine 58. 71-73 (GAA) contacts substrate.

Belongs to the PanD family. As to quaternary structure, heterooctamer of four alpha and four beta subunits. It depends on pyruvate as a cofactor. In terms of processing, is synthesized initially as an inactive proenzyme, which is activated by self-cleavage at a specific serine bond to produce a beta-subunit with a hydroxyl group at its C-terminus and an alpha-subunit with a pyruvoyl group at its N-terminus.

It localises to the cytoplasm. It carries out the reaction L-aspartate + H(+) = beta-alanine + CO2. Its pathway is cofactor biosynthesis; (R)-pantothenate biosynthesis; beta-alanine from L-aspartate: step 1/1. Functionally, catalyzes the pyruvoyl-dependent decarboxylation of aspartate to produce beta-alanine. The chain is Aspartate 1-decarboxylase from Haloquadratum walsbyi (strain DSM 16790 / HBSQ001).